A 108-amino-acid chain; its full sequence is UPF0102 protein Sputcn32_3693 (108 aa).

The protein belongs to the UPF0102 family.

The sequence is that of UPF0102 protein Sputcn32_3693 from Shewanella putrefaciens (strain CN-32 / ATCC BAA-453).